The sequence spans 156 residues: Riboflavin synthase (156 aa).

Belongs to the DMRL synthase family.

The catalysed reaction is 2 6,7-dimethyl-8-(1-D-ribityl)lumazine + H(+) = 5-amino-6-(D-ribitylamino)uracil + riboflavin. Its pathway is cofactor biosynthesis; riboflavin biosynthesis; riboflavin from 2-hydroxy-3-oxobutyl phosphate and 5-amino-6-(D-ribitylamino)uracil: step 2/2. This is Riboflavin synthase (ribC) from Methanocaldococcus jannaschii (strain ATCC 43067 / DSM 2661 / JAL-1 / JCM 10045 / NBRC 100440) (Methanococcus jannaschii).